Consider the following 82-residue polypeptide: Cytochrome c-551 (82 aa).

Heme c-binding residues include Cys-12, Cys-15, His-16, and Met-61.

In terms of processing, binds 1 heme c group covalently per subunit.

In terms of biological role, this is a prokaryotic monoheme cytochrome, unreactive with mitochondrial cytochrome C oxidase or reductase. It functions in nitrite and nitrate respiration in Pseudomonas, but it is also found in other bacteria. The sequence is that of Cytochrome c-551 from Ectopseudomonas mendocina (Pseudomonas mendocina).